A 315-amino-acid chain; its full sequence is 2,3-dihydroxyphenylpropionate/2,3-dihydroxicinnamic acid 1,2-dioxygenase (315 aa).

The Proton donor role is filled by histidine 118. Residue histidine 182 is the Proton acceptor of the active site.

It belongs to the LigB/MhpB extradiol dioxygenase family. As to quaternary structure, homotetramer. It depends on Fe(2+) as a cofactor.

The enzyme catalyses 3-(2,3-dihydroxyphenyl)propanoate + O2 = (2Z,4E)-2-hydroxy-6-oxonona-2,4-dienedioate + H(+). It catalyses the reaction (2E)-3-(2,3-dihydroxyphenyl)prop-2-enoate + O2 = (2Z,4E,7E)-2-hydroxy-6-oxonona-2,4,7-trienedioate + H(+). It participates in aromatic compound metabolism; 3-phenylpropanoate degradation. Catalyzes the non-heme iron(II)-dependent oxidative cleavage of 2,3-dihydroxyphenylpropionic acid and 2,3-dihydroxicinnamic acid into 2-hydroxy-6-ketononadienedioate and 2-hydroxy-6-ketononatrienedioate, respectively. The protein is 2,3-dihydroxyphenylpropionate/2,3-dihydroxicinnamic acid 1,2-dioxygenase of Mycolicibacterium gilvum (strain PYR-GCK) (Mycobacterium gilvum (strain PYR-GCK)).